Reading from the N-terminus, the 99-residue chain is uncharacterized protein (99 aa).

The TM2 domain maps to 32 to 79; it reads KKSVGIAVLLSFIIPGAGQMYLGRVGKGIILLLTCWLIIPWIYSIYDA. 2 helical membrane passes run 34-54 and 56-76; these read SVGI…MYLG and VGKG…IYSI.

It is found in the cell membrane. This is an uncharacterized protein from Methanocaldococcus jannaschii (strain ATCC 43067 / DSM 2661 / JAL-1 / JCM 10045 / NBRC 100440) (Methanococcus jannaschii).